Here is a 557-residue protein sequence, read N- to C-terminus: Jerky protein (557 aa).

The HTH psq-type domain occupies 11 to 62; it reads KGEKRKRVVLTLKEKIDICTRLERGESRKALMQEYNVGMSTLYDIKAHKAQL. 2 consecutive DNA-binding regions (H-T-H motif) follow at residues 38 to 58 and 110 to 142; these read RKALMQEYNVGMSTLYDIKAH and PMLIEKAKDFYKQMRLTEPCVFSGGWLWRFKAR. An HTH CENPB-type domain is found at 77–149; it reads QRRTLHTPKL…KARHGIKKLD (73 aa). One can recognise a DDE-1 domain in the interval 213–382; that stretch reads KDRLTVLMCA…VPSQVFQRAW (170 aa).

Belongs to the tigger transposable element derived protein family. Brain; highest in the temporal and brainstem regions.

Its subcellular location is the nucleus. Its function is as follows. May bind DNA. In Mus musculus (Mouse), this protein is Jerky protein.